The following is a 204-amino-acid chain: Holliday junction branch migration complex subunit RuvA (204 aa).

The tract at residues 1-64 (MIGRLCGTAE…EDAITLFGFI (64 aa)) is domain I. The domain II stretch occupies residues 65 to 143 (DAAERDWFRL…AMPTGSAFIP (79 aa)). The interval 144-154 (TGTAPPVAPPQ) is flexible linker. The domain III stretch occupies residues 154-204 (QGKLADALSALVNLGYRRAEAEAALSAVQAEAGEDAALDELIRGGLRRLAR).

Belongs to the RuvA family. As to quaternary structure, homotetramer. Forms an RuvA(8)-RuvB(12)-Holliday junction (HJ) complex. HJ DNA is sandwiched between 2 RuvA tetramers; dsDNA enters through RuvA and exits via RuvB. An RuvB hexamer assembles on each DNA strand where it exits the tetramer. Each RuvB hexamer is contacted by two RuvA subunits (via domain III) on 2 adjacent RuvB subunits; this complex drives branch migration. In the full resolvosome a probable DNA-RuvA(4)-RuvB(12)-RuvC(2) complex forms which resolves the HJ.

It localises to the cytoplasm. Functionally, the RuvA-RuvB-RuvC complex processes Holliday junction (HJ) DNA during genetic recombination and DNA repair, while the RuvA-RuvB complex plays an important role in the rescue of blocked DNA replication forks via replication fork reversal (RFR). RuvA specifically binds to HJ cruciform DNA, conferring on it an open structure. The RuvB hexamer acts as an ATP-dependent pump, pulling dsDNA into and through the RuvAB complex. HJ branch migration allows RuvC to scan DNA until it finds its consensus sequence, where it cleaves and resolves the cruciform DNA. The chain is Holliday junction branch migration complex subunit RuvA from Acidiphilium cryptum (strain JF-5).